The following is a 268-amino-acid chain: Tryptophan synthase alpha chain (268 aa).

Active-site proton acceptor residues include Glu-49 and Asp-60.

Belongs to the TrpA family. Tetramer of two alpha and two beta chains.

The enzyme catalyses (1S,2R)-1-C-(indol-3-yl)glycerol 3-phosphate + L-serine = D-glyceraldehyde 3-phosphate + L-tryptophan + H2O. It functions in the pathway amino-acid biosynthesis; L-tryptophan biosynthesis; L-tryptophan from chorismate: step 5/5. In terms of biological role, the alpha subunit is responsible for the aldol cleavage of indoleglycerol phosphate to indole and glyceraldehyde 3-phosphate. This chain is Tryptophan synthase alpha chain, found in Pseudomonas aeruginosa (strain LESB58).